A 221-amino-acid chain; its full sequence is 7-cyano-7-deazaguanine synthase (221 aa).

10–20 is an ATP binding site; sequence FSGGQDSTTCL. C186, C195, C198, and C201 together coordinate Zn(2+).

This sequence belongs to the QueC family. In terms of assembly, homodimer. It depends on Zn(2+) as a cofactor.

It catalyses the reaction 7-carboxy-7-deazaguanine + NH4(+) + ATP = 7-cyano-7-deazaguanine + ADP + phosphate + H2O + H(+). Its pathway is purine metabolism; 7-cyano-7-deazaguanine biosynthesis. Its function is as follows. Catalyzes the ATP-dependent conversion of 7-carboxy-7-deazaguanine (CDG) to 7-cyano-7-deazaguanine (preQ(0)). This chain is 7-cyano-7-deazaguanine synthase, found in Anoxybacillus flavithermus (strain DSM 21510 / WK1).